A 63-amino-acid chain; its full sequence is Megourin-3 (63 aa).

As to quaternary structure, monomer. Contains four disulfide bonds.

The protein resides in the secreted. Has antimicrobial activity against Gram-positive bacteria and fungi. The sequence is that of Megourin-3 from Megoura viciae (Vetch aphid).